We begin with the raw amino-acid sequence, 375 residues long: Fructose-1,6-bisphosphate aldolase/phosphatase (375 aa).

Aspartate 15 (proton acceptor; for FBP phosphatase activity) is an active-site residue. Aspartate 15, histidine 22, aspartate 56, and aspartate 57 together coordinate Mg(2+). Residue histidine 22 coordinates beta-D-fructose 1,6-bisphosphate. Position 22 (histidine 22) interacts with dihydroxyacetone phosphate. Tyrosine 94 contacts beta-D-fructose 1,6-bisphosphate. Glutamine 98 provides a ligand contact to Mg(2+). Residue 107-108 (GN) coordinates beta-D-fructose 1,6-bisphosphate. Residue aspartate 135 coordinates Mg(2+). Residue lysine 136 participates in beta-D-fructose 1,6-bisphosphate binding. Lysine 136 is a dihydroxyacetone phosphate binding site. The active-site Proton donor/acceptor; for FBP aldolase activity is tyrosine 237. Residues lysine 240, aspartate 241, and aspartate 242 each contribute to the Mg(2+) site. Catalysis depends on lysine 240, which acts as the Schiff-base intermediate with DHAP; for FBP aldolase activity. Beta-D-fructose 1,6-bisphosphate is bound by residues 250 to 251 (QS), arginine 274, aspartate 295, and tyrosine 357. Residues arginine 274 and aspartate 295 each contribute to the dihydroxyacetone phosphate site.

The protein belongs to the FBP aldolase/phosphatase family. Homooctamer; dimer of tetramers. Requires Mg(2+) as cofactor.

The catalysed reaction is beta-D-fructose 1,6-bisphosphate + H2O = beta-D-fructose 6-phosphate + phosphate. It carries out the reaction beta-D-fructose 1,6-bisphosphate = D-glyceraldehyde 3-phosphate + dihydroxyacetone phosphate. It participates in carbohydrate biosynthesis; gluconeogenesis. With respect to regulation, activity is enhanced by dithioerythritol, and is slightly inhibited by fructose 2,6-bisphosphate. AMP does not inhibit the enzyme activity. Functionally, catalyzes two subsequent steps in gluconeogenesis: the aldol condensation of dihydroxyacetone phosphate (DHAP) and glyceraldehyde-3-phosphate (GA3P) to fructose-1,6-bisphosphate (FBP), and the dephosphorylation of FBP to fructose-6-phosphate (F6P). Does not display hydrolase activity against fructose 2,6-bisphosphate, fructose 6-phosphate, fructose 1-phosphate, glucose 6-phosphate, and glucose 1-phosphate. Exhibits only negligible activity on inositol-1-phosphate (IMP). Is essential for the growth of T.kodakaraensis under gluconeogenic conditions. This Thermococcus kodakarensis (strain ATCC BAA-918 / JCM 12380 / KOD1) (Pyrococcus kodakaraensis (strain KOD1)) protein is Fructose-1,6-bisphosphate aldolase/phosphatase.